A 97-amino-acid chain; its full sequence is Peptide YY (97 aa).

An N-terminal signal peptide occupies residues 1 to 28; sequence MVFVRRPWPALTTVLLALLVCLGALVDA. Residue Ser41 is modified to Phosphoserine. Tyrosine amide is present on Tyr64. Positions 65–97 are disordered; it reads GKRDGPDTLLSKTFFPDGEDRPVRSRSEGPDLW. Residues 68-97 constitute a propeptide that is removed on maturation; it reads DGPDTLLSKTFFPDGEDRPVRSRSEGPDLW. A compositionally biased stretch (basic and acidic residues) spans 82 to 97; sequence GEDRPVRSRSEGPDLW.

Belongs to the NPY family. Post-translationally, the peptide YY form is cleaved at Pro-30 by the prolyl endopeptidase FAP (seprase) activity (in vitro) to generate peptide YY(3-36).

The protein localises to the secreted. Functionally, this gut peptide inhibits exocrine pancreatic secretion, has a vasoconstrictory action and inhibitis jejunal and colonic mobility. The polypeptide is Peptide YY (PYY) (Homo sapiens (Human)).